We begin with the raw amino-acid sequence, 291 residues long: Nitrogenase iron protein (291 aa).

11-18 (GKGGIGKS) serves as a coordination point for ATP. Cys-99 serves as a coordination point for [4Fe-4S] cluster. Residue Arg-102 is modified to ADP-ribosylarginine; by dinitrogenase reductase ADP-ribosyltransferase. Residue Cys-133 participates in [4Fe-4S] cluster binding.

The protein belongs to the NifH/BchL/ChlL family. Homodimer. Requires [4Fe-4S] cluster as cofactor. Post-translationally, the reversible ADP-ribosylation of Arg-102 inactivates the nitrogenase reductase and regulates nitrogenase activity.

The enzyme catalyses N2 + 8 reduced [2Fe-2S]-[ferredoxin] + 16 ATP + 16 H2O = H2 + 8 oxidized [2Fe-2S]-[ferredoxin] + 2 NH4(+) + 16 ADP + 16 phosphate + 6 H(+). Its function is as follows. The key enzymatic reactions in nitrogen fixation are catalyzed by the nitrogenase complex, which has 2 components: the iron protein and the molybdenum-iron protein. The chain is Nitrogenase iron protein from Cereibacter sphaeroides (strain ATCC 17023 / DSM 158 / JCM 6121 / CCUG 31486 / LMG 2827 / NBRC 12203 / NCIMB 8253 / ATH 2.4.1.) (Rhodobacter sphaeroides).